Consider the following 385-residue polypeptide: Arginine biosynthesis bifunctional protein ArgJ (385 aa).

Thr142, Lys168, Thr179, Glu259, Asn380, and Thr385 together coordinate substrate. The Nucleophile role is filled by Thr179.

This sequence belongs to the ArgJ family. In terms of assembly, heterotetramer of two alpha and two beta chains.

The protein localises to the cytoplasm. It catalyses the reaction N(2)-acetyl-L-ornithine + L-glutamate = N-acetyl-L-glutamate + L-ornithine. The enzyme catalyses L-glutamate + acetyl-CoA = N-acetyl-L-glutamate + CoA + H(+). Its pathway is amino-acid biosynthesis; L-arginine biosynthesis; L-ornithine and N-acetyl-L-glutamate from L-glutamate and N(2)-acetyl-L-ornithine (cyclic): step 1/1. It participates in amino-acid biosynthesis; L-arginine biosynthesis; N(2)-acetyl-L-ornithine from L-glutamate: step 1/4. Catalyzes two activities which are involved in the cyclic version of arginine biosynthesis: the synthesis of N-acetylglutamate from glutamate and acetyl-CoA as the acetyl donor, and of ornithine by transacetylation between N(2)-acetylornithine and glutamate. The chain is Arginine biosynthesis bifunctional protein ArgJ from Leptospira interrogans serogroup Icterohaemorrhagiae serovar Lai (strain 56601).